A 135-amino-acid chain; its full sequence is NADPH-dependent 7-cyano-7-deazaguanine reductase (135 aa).

The active-site Thioimide intermediate is the cysteine 48. The active-site Proton donor is aspartate 55. Residues 70–72 (LEL) and 89–90 (HE) contribute to the substrate site.

This sequence belongs to the GTP cyclohydrolase I family. QueF type 1 subfamily.

Its subcellular location is the cytoplasm. The catalysed reaction is 7-aminomethyl-7-carbaguanine + 2 NADP(+) = 7-cyano-7-deazaguanine + 2 NADPH + 3 H(+). Its pathway is tRNA modification; tRNA-queuosine biosynthesis. Its function is as follows. Catalyzes the NADPH-dependent reduction of 7-cyano-7-deazaguanine (preQ0) to 7-aminomethyl-7-deazaguanine (preQ1). This Prochlorococcus marinus (strain SARG / CCMP1375 / SS120) protein is NADPH-dependent 7-cyano-7-deazaguanine reductase.